The primary structure comprises 471 residues: 3-hydroxylaminophenol mutase (471 aa).

The region spanning 15-100 is the GS beta-grasp domain; it reads NDVKFVDFRF…TCDVVEPSDG (86 aa). The region spanning 107–471 is the GS catalytic domain; the sequence is PRSIAKRAEA…PVEFEMYYSL (365 aa).

It belongs to the glutamine synthetase family.

It catalyses the reaction 3-hydroxyaminophenol = aminohydroquinone. With respect to regulation, is inhibited by H(2)O(2). 1,10-phenanthroline inhibits the activity slightly, but other metal cation chelators such as EDTA or tiron have no effect on the activity. Divalent metal cations and hydroxylamine have also no effect on the activity. Due to the relationship of the protein with glutamine synthetases, glutamate and glutamine were tested as inhibitors; neither preincubation of the compounds with the enzyme nor their addition to the assay buffer affected 3HAP mutase activity. Functionally, catalyzes the isomerization of 3-hydroxylaminophenol (3HAP) to aminohydroquinone, a step in the degradative pathway of 3-nitrophenol. The enzymatic reaction is regiospecific since it leads to the formation of aminohydroquinone exclusively, without producing the isomeric 4-aminocatechol. Can also isomerize other hydroxylaminoaromatic compounds, such as hydroxylaminobenzene to a mixture of 2-aminophenol and 4-aminophenol, 4-hydroxylaminotoluene to 6-amino-m-cresol, and 2-chloro-5-hydroxylaminophenol to 2-amino-5-chlorohydroquinone. Does not act on 4-hydroxylaminobenzoate. In Cupriavidus pinatubonensis (strain JMP 134 / LMG 1197) (Cupriavidus necator (strain JMP 134)), this protein is 3-hydroxylaminophenol mutase.